Reading from the N-terminus, the 382-residue chain is ADP,ATP carrier protein, mitochondrial (382 aa).

The N-terminal 71 residues, 1–71 (MAEQANQPTV…PMMSSSPIFA (71 aa)), are a transit peptide targeting the mitochondrion. 3 Solcar repeats span residues 80–173 (KNFM…FKRL), 185–277 (KWFG…LKPV), and 285–371 (DNFF…LQIL). The next 5 membrane-spanning stretches (helical) occupy residues 82–109 (FMIDFLMGGVSAAVSKTAAAPIERVKLL), 150–174 (TANVIRYFPTQALNFAFKDYFKRLF), 183–203 (YWKWFGGNLASGGAAGASSLF), 253–274 (FNISCVGIIVYRGLYFGMYDSL), and 288–308 (FASFALGWLITNGAGLASYPI). R155 and K167 together coordinate ADP. Position 312 (R312) interacts with ADP. The important for transport activity stretch occupies residues 312–317 (RRRMMM). Residues 312-317 (RRRMMM) carry the Nucleotide carrier signature motif motif. A helical membrane pass occupies residues 348–368 (AGANILRAIAGAGVLSGYDQL).

This sequence belongs to the mitochondrial carrier (TC 2.A.29) family. As to quaternary structure, monomer.

It localises to the mitochondrion inner membrane. The catalysed reaction is ADP(in) + ATP(out) = ADP(out) + ATP(in). Its activity is regulated as follows. The matrix-open state (m-state) is inhibited by the membrane-permeable bongkrekic acid (BKA). The cytoplasmic-open state (c-state) is inhibited by the membrane-impermeable toxic inhibitor carboxyatractyloside (CATR). Its function is as follows. ADP:ATP antiporter that mediates import of ADP into the mitochondrial matrix for ATP synthesis, and export of ATP out to fuel the cell. Cycles between the cytoplasmic-open state (c-state) and the matrix-open state (m-state): operates by the alternating access mechanism with a single substrate-binding site intermittently exposed to either the cytosolic (c-state) or matrix (m-state) side of the inner mitochondrial membrane. In Oryza sativa subsp. japonica (Rice), this protein is ADP,ATP carrier protein, mitochondrial.